A 210-amino-acid chain; its full sequence is MSAKSAISKEIFAPLDERMLGAVQVKRRTKKKIPFLATGGQGEYLTYICLSVTNKKPTQASITKVKQFEGSTSFVRRSQWMLEQLRQVKGIDPNRDSAEFDLLFENAFDQWVASTASEKCTFFQILHHTCQRYLTDRKPEFINCQSKIMGGNSILHSAADSVTSAVQKASQALNERGERLGRAEEKTEDLKNSAQQFAETAHKLAMKHKC.

Ser-2 is subject to N-acetylserine. Residues 151 to 210 form the v-SNARE coiled-coil homology domain; sequence GNSILHSAADSVTSAVQKASQALNERGERLGRAEEKTEDLKNSAQQFAETAHKLAMKHKC.

In terms of assembly, part of a ternary complex containing SNAP25 and STX1A that can be dissociated by NAPA and NSF. Interacts with STX4A.

It is found in the cytoplasm. The protein resides in the membrane. Forms non-fusogenic complexes with SNAP25 and STX1A and may thereby modulate the formation of functional SNARE complexes and exocytosis. This chain is Syntaxin-binding protein 6 (STXBP6), found in Bos taurus (Bovine).